The following is a 34-amino-acid chain: Colipase (34 aa).

2 disulfide bridges follow: Cys12-Cys23 and Cys18-Cys34.

This sequence belongs to the colipase family. Forms a 1:1 stoichiometric complex with pancreatic lipase. In terms of tissue distribution, expressed by the pancreas.

The protein resides in the secreted. In terms of biological role, colipase is a cofactor of pancreatic lipase. It allows the lipase to anchor itself to the lipid-water interface. Without colipase the enzyme is washed off by bile salts, which have an inhibitory effect on the lipase. This chain is Colipase (CLPS), found in Gallus gallus (Chicken).